Consider the following 701-residue polypeptide: Elongation factor G (701 aa).

A tr-type G domain is found at 8 to 290; the sequence is SLYRNIGISA…AVVELLPAPT (283 aa). GTP contacts are provided by residues 17–24, 88–92, and 142–145; these read AHIDAGKT, DTPGH, and NKMD.

The protein belongs to the TRAFAC class translation factor GTPase superfamily. Classic translation factor GTPase family. EF-G/EF-2 subfamily.

The protein localises to the cytoplasm. Catalyzes the GTP-dependent ribosomal translocation step during translation elongation. During this step, the ribosome changes from the pre-translocational (PRE) to the post-translocational (POST) state as the newly formed A-site-bound peptidyl-tRNA and P-site-bound deacylated tRNA move to the P and E sites, respectively. Catalyzes the coordinated movement of the two tRNA molecules, the mRNA and conformational changes in the ribosome. In Neisseria gonorrhoeae (strain ATCC 700825 / FA 1090), this protein is Elongation factor G.